Consider the following 138-residue polypeptide: Large ribosomal subunit protein uL16c (138 aa).

It belongs to the universal ribosomal protein uL16 family. As to quaternary structure, part of the 50S ribosomal subunit.

The protein resides in the plastid. It is found in the chloroplast. This Physcomitrium patens (Spreading-leaved earth moss) protein is Large ribosomal subunit protein uL16c.